The primary structure comprises 609 residues: Alpha-fetoprotein (609 aa).

Positions 1–18 are cleaved as a signal peptide; the sequence is MKWVESIFLIFLLNFTES. Albumin domains are found at residues 19–210, 211–402, and 403–601; these read RTLH…ATVT, KELR…EELQ, and KYIQ…KLIS. A Cu(2+)-binding site is contributed by His-22. Asn-42 is a glycosylation site (N-linked (GlcNAc...) asparagine). 8 cysteine pairs are disulfide-bonded: Cys-99-Cys-114, Cys-113-Cys-124, Cys-148-Cys-193, Cys-192-Cys-201, Cys-224-Cys-270, Cys-269-Cys-277, Cys-289-Cys-303, and Cys-302-Cys-313. 3 positions are modified to phosphoserine: Ser-111, Ser-115, and Ser-117. Asn-251 carries an N-linked (GlcNAc...) asparagine glycan. The residue at position 344 (Ser-344) is a Phosphoserine. 7 disulfides stabilise this stretch: Cys-384/Cys-393, Cys-416/Cys-462, Cys-461/Cys-472, Cys-485/Cys-501, Cys-500/Cys-511, Cys-538/Cys-583, and Cys-582/Cys-591. Ser-444 bears the Phosphoserine mark.

This sequence belongs to the ALB/AFP/VDB family. In terms of assembly, dimeric and trimeric forms have been found in addition to the monomeric form. In terms of tissue distribution, plasma. Synthesized by the fetal liver and yolk sac.

The protein localises to the secreted. Its function is as follows. Binds copper, nickel, and fatty acids as well as, and bilirubin less well than, serum albumin. This chain is Alpha-fetoprotein (AFP), found in Pan troglodytes (Chimpanzee).